A 732-amino-acid chain; its full sequence is uncharacterized protein (732 aa).

2 disordered regions span residues 38-90 (TTLA…NNNK) and 226-629 (EESP…MDYQ). Low complexity predominate over residues 47-56 (QQQQQQQQQQ). The segment covering 57 to 76 (PPSSSTTKEGGATTTQDNKL) has biased composition (polar residues). Composition is skewed to low complexity over residues 77–89 (TANG…NNNN), 231–247 (TTTT…TTAA), and 254–318 (TTTT…GTNS). Over residues 327 to 338 (KAKKGVPKKAPT) the composition is skewed to basic residues. 3 stretches are compositionally biased toward low complexity: residues 339–383 (KKQP…APKT), 401–421 (KTSK…STTK), and 487–523 (SAST…IKSK). Positions 553 to 566 (AAAEEQEEEEEEDN) are enriched in acidic residues. Low complexity-rich tracts occupy residues 567 to 577 (SNGIQNNNSSN) and 593 to 609 (DNFS…NGLL). The segment covering 610-621 (SEDDDDDDDDDN) has biased composition (acidic residues).

This is an uncharacterized protein from Dictyostelium discoideum (Social amoeba).